Reading from the N-terminus, the 214-residue chain is Pyridoxine/pyridoxamine 5'-phosphate oxidase (214 aa).

Residues 9–12 (RREY) and lysine 67 each bind substrate. FMN-binding positions include 62–67 (RTVLLK), 77–78 (YS), arginine 83, lysine 84, and glutamine 106. Residues tyrosine 124, arginine 128, and serine 132 each coordinate substrate. FMN contacts are provided by residues 141-142 (QS) and tryptophan 186. 192-194 (RLH) is a substrate binding site. FMN is bound at residue arginine 196.

It belongs to the pyridoxamine 5'-phosphate oxidase family. In terms of assembly, homodimer. FMN is required as a cofactor.

The catalysed reaction is pyridoxamine 5'-phosphate + O2 + H2O = pyridoxal 5'-phosphate + H2O2 + NH4(+). It carries out the reaction pyridoxine 5'-phosphate + O2 = pyridoxal 5'-phosphate + H2O2. The protein operates within cofactor metabolism; pyridoxal 5'-phosphate salvage; pyridoxal 5'-phosphate from pyridoxamine 5'-phosphate: step 1/1. It functions in the pathway cofactor metabolism; pyridoxal 5'-phosphate salvage; pyridoxal 5'-phosphate from pyridoxine 5'-phosphate: step 1/1. Functionally, catalyzes the oxidation of either pyridoxine 5'-phosphate (PNP) or pyridoxamine 5'-phosphate (PMP) into pyridoxal 5'-phosphate (PLP). The polypeptide is Pyridoxine/pyridoxamine 5'-phosphate oxidase (Porphyromonas gingivalis (strain ATCC BAA-308 / W83)).